The primary structure comprises 93 residues: UPF0250 protein PA3998 (93 aa).

This sequence belongs to the UPF0250 family.

This chain is UPF0250 protein PA3998, found in Pseudomonas aeruginosa (strain ATCC 15692 / DSM 22644 / CIP 104116 / JCM 14847 / LMG 12228 / 1C / PRS 101 / PAO1).